Reading from the N-terminus, the 207-residue chain is Dephospho-CoA kinase (207 aa).

The 200-residue stretch at 8–207 folds into the DPCK domain; the sequence is AIALTGSIGS…LPCVDCVQSS (200 aa). 16–21 is a binding site for ATP; the sequence is GSGKST.

It belongs to the CoaE family.

The protein resides in the cytoplasm. The enzyme catalyses 3'-dephospho-CoA + ATP = ADP + CoA + H(+). The protein operates within cofactor biosynthesis; coenzyme A biosynthesis; CoA from (R)-pantothenate: step 5/5. Catalyzes the phosphorylation of the 3'-hydroxyl group of dephosphocoenzyme A to form coenzyme A. This chain is Dephospho-CoA kinase, found in Helicobacter hepaticus (strain ATCC 51449 / 3B1).